A 575-amino-acid polypeptide reads, in one-letter code: Probable cytochrome P450 514A1 (575 aa).

Residues 4–24 (IFTIILTITILVLSLILKDLL) traverse the membrane as a helical segment. Position 448 (cysteine 448) interacts with heme.

Belongs to the cytochrome P450 family. Heme serves as cofactor.

It localises to the membrane. This chain is Probable cytochrome P450 514A1 (cyp514A1), found in Dictyostelium discoideum (Social amoeba).